The sequence spans 128 residues: Histone H2A type 1-H (128 aa).

Residues 1–22 (MSGRGKQGGKARAKAKTRSSRA) form a disordered region. Ser2 is modified (N-acetylserine). Ser2 bears the Phosphoserine; by RPS6KA5 mark. Arg4 is subject to Citrulline; alternate. Arg4 is subject to Symmetric dimethylarginine; by PRMT5; alternate. At Lys6 the chain carries N6-(2-hydroxyisobutyryl)lysine. Basic residues predominate over residues 7–19 (QGGKARAKAKTRS). Residue Lys10 is modified to N6-(2-hydroxyisobutyryl)lysine; alternate. N6-(beta-hydroxybutyryl)lysine; alternate occurs at positions 10 and 14. At Lys10 the chain carries N6-lactoyllysine; alternate. At Lys10 the chain carries N6-succinyllysine; alternate. A Glycyl lysine isopeptide (Lys-Gly) (interchain with G-Cter in ubiquitin); alternate cross-link involves residue Lys14. Residue Lys16 forms a Glycyl lysine isopeptide (Lys-Gly) (interchain with G-Cter in ubiquitin) linkage. Residue Lys37 is modified to N6-(2-hydroxyisobutyryl)lysine; alternate. An N6-(beta-hydroxybutyryl)lysine; alternate modification is found at Lys37. Residue Lys37 is modified to N6-crotonyllysine; alternate. An N6-(2-hydroxyisobutyryl)lysine mark is found at Lys75 and Lys76. Lys96 bears the N6-(2-hydroxyisobutyryl)lysine; alternate mark. N6-(beta-hydroxybutyryl)lysine; alternate is present on Lys96. Lys96 bears the N6-succinyllysine; alternate mark. Lys96 bears the N6-glutaryllysine; alternate mark. Lys100 bears the N6-glutaryllysine mark. The residue at position 105 (Gln105) is an N5-methylglutamine. Lys119 is subject to N6-(2-hydroxyisobutyryl)lysine; alternate. At Lys119 the chain carries N6-(beta-hydroxybutyryl)lysine; alternate. Lys119 and Lys120 each carry N6-crotonyllysine; alternate. 2 positions are modified to N6-glutaryllysine; alternate: Lys119 and Lys120. Residue Lys120 forms a Glycyl lysine isopeptide (Lys-Gly) (interchain with G-Cter in ubiquitin); alternate linkage. Position 121 is a phosphothreonine; by DCAF1 (Thr121). At Lys126 the chain carries N6-crotonyllysine; alternate. At Lys126 the chain carries N6-glutaryllysine; alternate.

The protein belongs to the histone H2A family. As to quaternary structure, the nucleosome is a histone octamer containing two molecules each of H2A, H2B, H3 and H4 assembled in one H3-H4 heterotetramer and two H2A-H2B heterodimers. The octamer wraps approximately 147 bp of DNA. Post-translationally, deiminated on Arg-4 in granulocytes upon calcium entry. Monoubiquitination of Lys-120 (H2AK119Ub) by RING1, TRIM37 and RNF2/RING2 complex gives a specific tag for epigenetic transcriptional repression and participates in X chromosome inactivation of female mammals. It is involved in the initiation of both imprinted and random X inactivation. Ubiquitinated H2A is enriched in inactive X chromosome chromatin. Ubiquitination of H2A functions downstream of methylation of 'Lys-27' of histone H3 (H3K27me). H2AK119Ub by RNF2/RING2 can also be induced by ultraviolet and may be involved in DNA repair. Monoubiquitination of Lys-120 (H2AK119Ub) by TRIM37 may promote transformation of cells in a number of breast cancers. Following DNA double-strand breaks (DSBs), it is ubiquitinated through 'Lys-63' linkage of ubiquitin moieties by the E2 ligase UBE2N and the E3 ligases RNF8 and RNF168, leading to the recruitment of repair proteins to sites of DNA damage. Ubiquitination at Lys-14 and Lys-16 (H2AK13Ub and H2AK15Ub, respectively) in response to DNA damage is initiated by RNF168 that mediates monoubiquitination at these 2 sites, and 'Lys-63'-linked ubiquitin are then conjugated to monoubiquitin; RNF8 is able to extend 'Lys-63'-linked ubiquitin chains in vitro. Deubiquitinated by USP51 at Lys-14 and Lys-16 (H2AK13Ub and H2AK15Ub, respectively) after damaged DNA is repaired. H2AK119Ub and ionizing radiation-induced 'Lys-63'-linked ubiquitination (H2AK13Ub and H2AK15Ub) are distinct events. In terms of processing, phosphorylation on Ser-2 (H2AS1ph) is enhanced during mitosis. Phosphorylation on Ser-2 by RPS6KA5/MSK1 directly represses transcription. Acetylation of H3 inhibits Ser-2 phosphorylation by RPS6KA5/MSK1. Phosphorylation at Thr-121 (H2AT120ph) by DCAF1 is present in the regulatory region of many tumor suppresor genes and down-regulates their transcription. Post-translationally, glutamine methylation at Gln-105 (H2AQ104me) by FBL is specifically dedicated to polymerase I. It is present at 35S ribosomal DNA locus and impairs binding of the FACT complex. Symmetric dimethylation on Arg-4 by the PRDM1/PRMT5 complex may play a crucial role in the germ-cell lineage. In terms of processing, crotonylation (Kcr) is specifically present in male germ cells and marks testis-specific genes in post-meiotic cells, including X-linked genes that escape sex chromosome inactivation in haploid cells. Crotonylation marks active promoters and enhancers and confers resistance to transcriptional repressors. It is also associated with post-meiotically activated genes on autosomes. Post-translationally, lactylated in macrophages by EP300/P300 by using lactoyl-CoA directly derived from endogenous or exogenous lactate, leading to stimulates gene transcription.

It localises to the nucleus. The protein localises to the chromosome. In terms of biological role, core component of nucleosome. Nucleosomes wrap and compact DNA into chromatin, limiting DNA accessibility to the cellular machineries which require DNA as a template. Histones thereby play a central role in transcription regulation, DNA repair, DNA replication and chromosomal stability. DNA accessibility is regulated via a complex set of post-translational modifications of histones, also called histone code, and nucleosome remodeling. This chain is Histone H2A type 1-H, found in Homo sapiens (Human).